A 728-amino-acid chain; its full sequence is Catalase-peroxidase 1 (728 aa).

Positions 91-218 (WHSAGTYRTA…LAAVQMGLIY (128 aa)) form a cross-link, tryptophyl-tyrosyl-methioninium (Trp-Tyr) (with M-244). Residue H92 is the Proton acceptor of the active site. The tryptophyl-tyrosyl-methioninium (Tyr-Met) (with W-91) cross-link spans 218–244 (YVNPEGPDGNPDPVAAAHDIRETFARM). H259 is a heme b binding site.

The protein belongs to the peroxidase family. Peroxidase/catalase subfamily. Homodimer or homotetramer. Heme b is required as a cofactor. Post-translationally, formation of the three residue Trp-Tyr-Met cross-link is important for the catalase, but not the peroxidase activity of the enzyme.

It catalyses the reaction H2O2 + AH2 = A + 2 H2O. The catalysed reaction is 2 H2O2 = O2 + 2 H2O. In terms of biological role, bifunctional enzyme with both catalase and broad-spectrum peroxidase activity. This chain is Catalase-peroxidase 1, found in Burkholderia orbicola (strain MC0-3).